The sequence spans 850 residues: Trimethylamine-N-oxide reductase (850 aa).

A signal peptide (tat-type signal) is located at residues 1–39; the sequence is MKNKDSLHVSRRRFLAQLGGLTVAGMLGPSLLTPRSARA. Serine 191 lines the Mo-bis(molybdopterin guanine dinucleotide) pocket.

It belongs to the prokaryotic molybdopterin-containing oxidoreductase family. It depends on Mo-bis(molybdopterin guanine dinucleotide) as a cofactor. Predicted to be exported by the Tat system. The position of the signal peptide cleavage has not been experimentally proven.

It localises to the periplasm. It catalyses the reaction trimethylamine + 2 Fe(III)-[cytochrome c] + H2O = trimethylamine N-oxide + 2 Fe(II)-[cytochrome c] + 3 H(+). Reduces trimethylamine-N-oxide (TMAO) into trimethylamine; an anaerobic reaction coupled to energy-yielding reactions. This Salmonella typhimurium (strain LT2 / SGSC1412 / ATCC 700720) protein is Trimethylamine-N-oxide reductase (torA).